Reading from the N-terminus, the 418-residue chain is MIPVFLAAVAAFLPLTSGHIAFWHNSMYGFNVTEQTFPYDNRPVVPLQYMTFQEWWFHNHLDYPPHPGDFFDFPAGKAATAELACNKGATTWFNSSEGGNIQNGNDPCPGSPPSEYHTTGIDDVKGCAMAIAYESDVRKIKPEDFTVFSVNQTCVWYRFTDFQVPERMPPCPPGGCHCAWFWIHSPDSGGEQIYMNGFQCNITGSTSHVPLAKPKVARRCGADPDHGKPDAVPGNCTYGAKQPLYWLQKEGNNEFDDYIAPPFYNDLYNFKDGAQNDIFVDSYPDGIPDPSPEQTIVPTPVNAAAVAAATPAPSSSGSSPSSSSPGSSSTASTTSTSGPRPSARGFRRSTGERPPTGVPTPRKSWTQTRKLRYVCLDRARIVLCCKGLALMVHRLALQRGRHQEPSAQGASLAFLAAG.

The N-terminal stretch at 1–18 is a signal peptide; it reads MIPVFLAAVAAFLPLTSG. Asparagine 31, asparagine 94, and asparagine 151 each carry an N-linked (GlcNAc...) asparagine glycan. Cystine bridges form between cysteine 85/cysteine 108, cysteine 127/cysteine 154, cysteine 171/cysteine 176, and cysteine 178/cysteine 200. N-linked (GlcNAc...) asparagine glycosylation is found at asparagine 201 and asparagine 235. An intrachain disulfide couples cysteine 220 to cysteine 236. A compositionally biased stretch (low complexity) spans 307–343; the sequence is AAATPAPSSSGSSPSSSSPGSSSTASTTSTSGPRPSA. The segment at 307–364 is disordered; sequence AAATPAPSSSGSSPSSSSPGSSSTASTTSTSGPRPSARGFRRSTGERPPTGVPTPRKS.

This sequence belongs to the polysaccharide monooxygenase AA14 family. Cu(2+) serves as cofactor.

It is found in the secreted. Functionally, lytic polysaccharide monooxygenase (LPMO) that oxidatively cleaves xylan with both C1 and C4 regioselectivity and that specifically targets the protective shield made by heteroxylans that cover cellulose microfibrils in wood. Catalysis by LPMOs requires the reduction of the active-site copper from Cu(II) to Cu(I) by a reducing agent and H(2)O(2) or O(2) as a cosubstrate. Cleavage occurs only when xylans are bound to cellulose and not when they are in solution. Increases the efficiency of wood saccharification through oxidative cleavage of highly refractory xylan-coated cellulose fibers via synergistic relationship with xylan-active enzymes, xylobiohydrolases and cellobiohydrolases. The polypeptide is AA14 family lytic polysaccharide monooxygenase B (Trametes coccinea (strain BRFM310) (Pycnoporus coccineus)).